A 223-amino-acid polypeptide reads, in one-letter code: Neurotrophic factor BDNF precursor form (223 aa).

Positions 1 to 5 are cleaved as a signal peptide; the sequence is SCMKA. A propeptide spanning residues 6–114 is cleaved from the precursor; the sequence is APMKEVSIRG…AANMSMRVRR (109 aa). N-linked (GlcNAc...) asparagine glycosylation occurs at Asn-107. Cystine bridges form between Cys-127/Cys-194 and Cys-172/Cys-223.

This sequence belongs to the NGF-beta family.

It localises to the secreted. In terms of biological role, promotes the survival of neuronal populations that are all located either in the central nervous system or directly connected to it. In Exiliboa placata (Oaxacan dwarf boa), this protein is Neurotrophic factor BDNF precursor form (BDNF).